We begin with the raw amino-acid sequence, 538 residues long: Endoglucanase 16 (538 aa).

A signal peptide spans 1 to 26; sequence MRWRRVGDVVAVALLLGAAAAAAAAA. Asp-83 (nucleophile) is an active-site residue. Residues His-431, Asp-483, and Glu-492 contribute to the active site. A disordered region spans residues 513–538; that stretch reads RQESPSTTTTTTATTSSPEMGLSVNR. Positions 516 to 530 are enriched in low complexity; that stretch reads SPSTTTTTTATTSSP.

It belongs to the glycosyl hydrolase 9 (cellulase E) family.

The protein resides in the secreted. It catalyses the reaction Endohydrolysis of (1-&gt;4)-beta-D-glucosidic linkages in cellulose, lichenin and cereal beta-D-glucans.. The polypeptide is Endoglucanase 16 (Oryza sativa subsp. japonica (Rice)).